The following is a 537-amino-acid chain: Ribonuclease Y (537 aa).

The helical transmembrane segment at 4 to 24 (FPIIMSVFAAIIGLVIGYVSV) threads the bilayer. The segment at 112 to 148 (ASTLDRKDDNLSNKEKALEQKEQSLSDKSKHIDAREE) is disordered. The region spanning 227 to 287 (TNSTVHLPDD…IRREIARMTM (61 aa)) is the KH domain. In terms of domain architecture, HD spans 353 to 446 (VLRHSIEVAK…VAAADALSAA (94 aa)).

This sequence belongs to the RNase Y family.

It localises to the cell membrane. In terms of biological role, endoribonuclease that initiates mRNA decay. The chain is Ribonuclease Y from Streptococcus sanguinis (strain SK36).